The chain runs to 279 residues: Cell division protein FtsQ (279 aa).

The tract at residues 1-28 (MTPMKKQLDKSLGSRRGATATRAKERAD) is disordered. At 1-48 (MTPMKKQLDKSLGSRRGATATRAKERADNRNTGPAAIVRLLAFIPWNR) the chain is on the cytoplasmic side. The helical transmembrane segment at 49 to 69 (VLLHVSIFCFWLLVLSALIAG) threads the bilayer. The Periplasmic segment spans residues 70 to 279 (VKWLDRPVAT…WKADVTPEQG (210 aa)). A POTRA domain is found at 75 to 144 (RPVATVQVVG…DAVQVDLEEE (70 aa)).

This sequence belongs to the FtsQ/DivIB family. FtsQ subfamily. In terms of assembly, part of a complex composed of FtsB, FtsL and FtsQ.

Its subcellular location is the cell inner membrane. Functionally, essential cell division protein. May link together the upstream cell division proteins, which are predominantly cytoplasmic, with the downstream cell division proteins, which are predominantly periplasmic. May control correct divisome assembly. This is Cell division protein FtsQ from Hahella chejuensis (strain KCTC 2396).